We begin with the raw amino-acid sequence, 315 residues long: Methionyl-tRNA formyltransferase (315 aa).

114–117 contacts (6S)-5,6,7,8-tetrahydrofolate; the sequence is SLLP.

The protein belongs to the Fmt family.

The enzyme catalyses L-methionyl-tRNA(fMet) + (6R)-10-formyltetrahydrofolate = N-formyl-L-methionyl-tRNA(fMet) + (6S)-5,6,7,8-tetrahydrofolate + H(+). Functionally, attaches a formyl group to the free amino group of methionyl-tRNA(fMet). The formyl group appears to play a dual role in the initiator identity of N-formylmethionyl-tRNA by promoting its recognition by IF2 and preventing the misappropriation of this tRNA by the elongation apparatus. This is Methionyl-tRNA formyltransferase from Corynebacterium glutamicum (strain R).